The primary structure comprises 628 residues: Phosphomethylpyrimidine synthase (628 aa).

Substrate-binding positions include Asn225, Met254, Tyr283, His319, Ser339–Gly341, Asp380–Arg383, and Glu419. His423 provides a ligand contact to Zn(2+). Position 446 (Tyr446) interacts with substrate. Residue His487 participates in Zn(2+) binding. Positions 567, 570, and 575 each coordinate [4Fe-4S] cluster.

The protein belongs to the ThiC family. Homodimer. [4Fe-4S] cluster serves as cofactor.

The enzyme catalyses 5-amino-1-(5-phospho-beta-D-ribosyl)imidazole + S-adenosyl-L-methionine = 4-amino-2-methyl-5-(phosphooxymethyl)pyrimidine + CO + 5'-deoxyadenosine + formate + L-methionine + 3 H(+). It functions in the pathway cofactor biosynthesis; thiamine diphosphate biosynthesis. Functionally, catalyzes the synthesis of the hydroxymethylpyrimidine phosphate (HMP-P) moiety of thiamine from aminoimidazole ribotide (AIR) in a radical S-adenosyl-L-methionine (SAM)-dependent reaction. The sequence is that of Phosphomethylpyrimidine synthase from Leptothrix cholodnii (strain ATCC 51168 / LMG 8142 / SP-6) (Leptothrix discophora (strain SP-6)).